Reading from the N-terminus, the 1180-residue chain is Integrin alpha-1 (1180 aa).

An N-terminal signal peptide occupies residues 1 to 28; it reads MVPRRPASLEVTVACIWLLTVILGFCVS. The Extracellular portion of the chain corresponds to 29–1142; sequence FNVDVKNSMS…SKDGLPGRVP (1114 aa). The stretch at 30 to 91 is one FG-GAP 1 repeat; sequence NVDVKNSMSF…CPVGRERAMP (62 aa). Cys82 and Cys92 are joined by a disulfide. N-linked (GlcNAc...) asparagine glycosylation is found at Asn100, Asn105, Asn112, Asn217, Asn317, Asn341, Asn402, Asn418, and Asn459. The stretch at 101 to 160 is one FG-GAP 2 repeat; that stretch reads TSIPNVTEIKENMTFGSTLVTNPNGGFLACGPLYAYRCGHLHYTTGICSDVSPTFQVVNS. One can recognise a VWFA domain in the interval 175 to 364; it reads IVLDGSNSIY…LGERIFALEA (190 aa). An FG-GAP 3 repeat occupies 365–417; it reads TADQSAASFEMEMSQTGFSAHYSQDWVMLGAVGAYDWNGTVVMQKANQMVIPH. FG-GAP repeat units follow at residues 422 to 474, 475 to 537, 556 to 614, and 618 to 678; these read QTEP…DGNI, NILQ…RFEY, SCTK…TIRE, and QRIP…FEPN. Ca(2+) contacts are provided by Asp497, Asp499, Asp501, and Asp505. Asn531 carries N-linked (GlcNAc...) asparagine glycosylation. Asp579, Asn581, Asp583, Asp587, Asp641, Asn643, Asp645, and Asp649 together coordinate Ca(2+). Cys687 and Cys696 are oxidised to a cystine. Residues Asn698, Asn747, and Asn779 are each glycosylated (N-linked (GlcNAc...) asparagine). A disulfide bridge connects residues Cys702 and Cys755. Cys807 and Cys813 are oxidised to a cystine. Asn820, Asn839, Asn882, Asn907, Asn938, Asn965, Asn973, and Asn1007 each carry an N-linked (GlcNAc...) asparagine glycan. The cysteines at positions 877 and 885 are disulfide-linked. 2 cysteine pairs are disulfide-bonded: Cys1029–Cys1062 and Cys1066–Cys1073. Residues Asn1084, Asn1103, and Asn1114 are each glycosylated (N-linked (GlcNAc...) asparagine). The helical transmembrane segment at 1143–1165 threads the bilayer; the sequence is LWVILLSAFAGLLLLMLLILALW. At 1166–1180 the chain is on the cytoplasmic side; it reads KIGFFKRPLKKKMEK. Residues 1168-1172 carry the GFFKR motif motif; the sequence is GFFKR.

It belongs to the integrin alpha chain family. In terms of assembly, heterodimer of an alpha and a beta subunit. Alpha-1 associates with beta-1. Interacts with RAB21. Interacts (via cytoplasmic domain) with PTPN2; activates PTPN2 phosphatase activity towards EGFR and negatively regulates EGF signaling.

Its subcellular location is the membrane. In terms of biological role, integrin alpha-1/beta-1 is a receptor for laminin and collagen. It recognizes the proline-hydroxylated sequence G-F-P-G-E-R in collagen. Involved in anchorage-dependent, negative regulation of EGF-stimulated cell growth. The polypeptide is Integrin alpha-1 (Itga1) (Rattus norvegicus (Rat)).